The sequence spans 184 residues: Orotate phosphoribosyltransferase (184 aa).

5-phospho-alpha-D-ribose 1-diphosphate contacts are provided by residues Arg-99, Lys-100, Lys-103, His-105, and 125–133; that span reads EDTTTTGNS. The orotate site is built by Thr-129 and Arg-157.

It belongs to the purine/pyrimidine phosphoribosyltransferase family. PyrE subfamily. As to quaternary structure, homodimer. Requires Mg(2+) as cofactor.

The enzyme catalyses orotidine 5'-phosphate + diphosphate = orotate + 5-phospho-alpha-D-ribose 1-diphosphate. It functions in the pathway pyrimidine metabolism; UMP biosynthesis via de novo pathway; UMP from orotate: step 1/2. In terms of biological role, catalyzes the transfer of a ribosyl phosphate group from 5-phosphoribose 1-diphosphate to orotate, leading to the formation of orotidine monophosphate (OMP). The polypeptide is Orotate phosphoribosyltransferase (Corynebacterium glutamicum (strain ATCC 13032 / DSM 20300 / JCM 1318 / BCRC 11384 / CCUG 27702 / LMG 3730 / NBRC 12168 / NCIMB 10025 / NRRL B-2784 / 534)).